The following is a 200-amino-acid chain: MISPENVVPMVIESSARGERAFDIYSLLLKERIIFLGSQINDQVANLVIAQLLFLDREDPDKDISLYIHSPGGVISAGLAMYDTMQLIRPKVSTICVGVAASMATVLLCAGAKGKRYALPNATIHMHQAMGGAQGQASDIEIAAREIMRQQDILRNILVKHTGQTMEKIVHDSDRDYYLSAQQAVEYGLIDEILQKPENK.

The Nucleophile role is filled by S102. Residue H127 is part of the active site.

Belongs to the peptidase S14 family. Fourteen ClpP subunits assemble into 2 heptameric rings which stack back to back to give a disk-like structure with a central cavity, resembling the structure of eukaryotic proteasomes.

It is found in the cytoplasm. The catalysed reaction is Hydrolysis of proteins to small peptides in the presence of ATP and magnesium. alpha-casein is the usual test substrate. In the absence of ATP, only oligopeptides shorter than five residues are hydrolyzed (such as succinyl-Leu-Tyr-|-NHMec, and Leu-Tyr-Leu-|-Tyr-Trp, in which cleavage of the -Tyr-|-Leu- and -Tyr-|-Trp bonds also occurs).. In terms of biological role, cleaves peptides in various proteins in a process that requires ATP hydrolysis. Has a chymotrypsin-like activity. Plays a major role in the degradation of misfolded proteins. The polypeptide is ATP-dependent Clp protease proteolytic subunit (Dehalococcoides mccartyi (strain ATCC BAA-2100 / JCM 16839 / KCTC 5957 / BAV1)).